A 281-amino-acid chain; its full sequence is Large ribosomal subunit protein mL46 (281 aa).

The transit peptide at 1–19 directs the protein to the mitochondrion; sequence MKVNLMLKRGLATATATAS. The segment covering 106-118 has biased composition (basic and acidic residues); that stretch reads RERSTKQEVKLSD. Positions 106–141 are disordered; sequence RERSTKQEVKLSDDSTVAFSNNQKEQSKDDVNRPVI. Positions 119-129 are enriched in polar residues; sequence DSTVAFSNNQK.

Belongs to the mitochondrion-specific ribosomal protein mL46 family. In terms of assembly, component of the mitochondrial large ribosomal subunit (mt-LSU). Mature yeast 74S mitochondrial ribosomes consist of a small (37S) and a large (54S) subunit. The 37S small subunit contains a 15S ribosomal RNA (15S mt-rRNA) and 34 different proteins. The 54S large subunit contains a 21S rRNA (21S mt-rRNA) and 46 different proteins.

It is found in the mitochondrion. Its function is as follows. Component of the mitochondrial ribosome (mitoribosome), a dedicated translation machinery responsible for the synthesis of mitochondrial genome-encoded proteins, including at least some of the essential transmembrane subunits of the mitochondrial respiratory chain. The mitoribosomes are attached to the mitochondrial inner membrane and translation products are cotranslationally integrated into the membrane. In Saccharomyces cerevisiae (strain ATCC 204508 / S288c) (Baker's yeast), this protein is Large ribosomal subunit protein mL46 (MRPL17).